Consider the following 173-residue polypeptide: Propanediol dehydratase small subunit (173 aa).

It belongs to the diol/glycerol dehydratase small subunit family. In terms of assembly, the propanediol dehydratase enzyme is a heterotrimeric complex composed of a large (PduC), a medium (PduD) and a small (PduE) subunit. Adenosylcob(III)alamin serves as cofactor.

It localises to the bacterial microcompartment. It carries out the reaction propane-1,2-diol = propanal + H2O. Its pathway is polyol metabolism; 1,2-propanediol degradation. Inhibited by glycerol. In terms of biological role, part of the PduCDE complex that catalyzes the dehydration of 1,2-propanediol (1,2-PD) to propionaldehyde. Required for S.typhimurium growth on 1,2-PD as the sole carbon and energy source. Localized in the bacterial microcompartment (BMC) dedicated to 1,2-PD degradation. The 1,2-PD-specific bacterial microcompartment (BMC) concentrates low levels of 1,2-PD catabolic enzymes, concentrates volatile reaction intermediates thus enhancing pathway flux and keeps the level of toxic, mutagenic propionaldehyde low. In Salmonella typhimurium (strain LT2 / SGSC1412 / ATCC 700720), this protein is Propanediol dehydratase small subunit.